Reading from the N-terminus, the 689-residue chain is Elongation factor G (689 aa).

The region spanning Leu8–Leu282 is the tr-type G domain. Residues Ala17 to Thr24, Asp81 to His85, and Asn135 to Asp138 contribute to the GTP site.

It belongs to the TRAFAC class translation factor GTPase superfamily. Classic translation factor GTPase family. EF-G/EF-2 subfamily.

It localises to the cytoplasm. In terms of biological role, catalyzes the GTP-dependent ribosomal translocation step during translation elongation. During this step, the ribosome changes from the pre-translocational (PRE) to the post-translocational (POST) state as the newly formed A-site-bound peptidyl-tRNA and P-site-bound deacylated tRNA move to the P and E sites, respectively. Catalyzes the coordinated movement of the two tRNA molecules, the mRNA and conformational changes in the ribosome. The sequence is that of Elongation factor G from Mycoplasma mycoides subsp. mycoides SC (strain CCUG 32753 / NCTC 10114 / PG1).